The primary structure comprises 344 residues: Tripartite motif-containing protein 44 (344 aa).

Disordered regions lie at residues 1–25 (MASG…EPDE) and 68–165 (TPPA…EFDP). Over residues 75-92 (GAGKEEAEVKVEQEREIE) the composition is skewed to basic and acidic residues. Residues 93–165 (SEAGEESESE…ETEAESEFDP (73 aa)) show a composition bias toward acidic residues. A B box-type zinc finger spans residues 174–215 (VAKRKCPDHGLDLSTYCQEDRQLICVLCPVIGAHQGHQLSTL). Zn(2+)-binding residues include Cys-179, His-182, Cys-201, and His-207. Residues 290 to 325 (AHVTEILADIQSHMDRLMTQMAQAKEQLDTSNESAE) adopt a coiled-coil conformation. Residues 309–344 (QMAQAKEQLDTSNESAEPKAEGDEEGPSGASEEEDT) are disordered. Residues 330–344 (GDEEGPSGASEEEDT) are compositionally biased toward acidic residues. A phosphoserine mark is found at Ser-336 and Ser-339.

In terms of assembly, interacts (via coiled coil) with TRIM17 (via coiled coil).

Functionally, may play a role in the process of differentiation and maturation of neuronal cells. May regulate the activity of TRIM17. Is a negative regulator of PAX6 expression. The polypeptide is Tripartite motif-containing protein 44 (TRIM44) (Pongo abelii (Sumatran orangutan)).